We begin with the raw amino-acid sequence, 332 residues long: 2,7-dihydroxy-5-methyl-1-naphthoate 7-O-methyltransferase (332 aa).

Residue arginine 11 participates in substrate binding. S-adenosyl-L-methionine contacts are provided by residues tryptophan 133, histidine 153, aspartate 175–glycine 179, glycine 177, aspartate 200, serine 227–phenylalanine 228, and serine 242–alanine 243. The active-site Proton acceptor is histidine 246. A substrate-binding site is contributed by aspartate 247.

This sequence belongs to the class I-like SAM-binding methyltransferase superfamily. Cation-independent O-methyltransferase family.

It carries out the reaction 2,7-dihydroxy-5-methyl-1-naphthoate + S-adenosyl-L-methionine = 2-hydroxy-7-methoxy-5-methyl-1-naphthoate + S-adenosyl-L-homocysteine + H(+). It functions in the pathway antibiotic biosynthesis. Its function is as follows. S-adenosyl-L-methionine-dependent O-methyltransferase that catalyzes regiospecific methylation at the 7-hydroxy group of 2,7-dihydroxy-5-methyl-1-naphthoate in the biosynthesis of the naphthoate moiety of the neocarzinostatin chromophore. Also recognizes other dihydroxynaphthoate as substrates and catalyzes their regiospecific O-methylation. The carboxylate and its ortho-hydroxy groups of the substrate appear to be crucial for NcsB1 substrate recognition and binding, and O-methylation takes place only at the free hydroxy group of these dihydroxynaphthoic acids. The chain is 2,7-dihydroxy-5-methyl-1-naphthoate 7-O-methyltransferase from Streptomyces carzinostaticus.